Here is a 3078-residue protein sequence, read N- to C-terminus: Probable polyketide synthase 44 (3078 aa).

Residues 10–435 form the Ketosynthase family 3 (KS3) domain; that stretch reads DNDVAIIGIG…GSNACLILTE (426 aa). Active-site for beta-ketoacyl synthase activity residues include Cys175, His320, and His358. The interval 627–660 is acyl/malonyl transferase; it reads GILASISIGHSLGEVSSAVCSGMIDLETGCFIIY. Catalysis depends on Ser637, which acts as the For acyl/malonyl transferase activity. The interval 952 to 1072 is N-terminal hotdog fold; sequence TNHLGYRNER…GRLSTTKHND (121 aa). One can recognise a PKS/mFAS DH domain in the interval 952-1239; it reads TNHLGYRNER…YTQLTPYKNQ (288 aa). His984 acts as the Proton acceptor; for dehydratase activity in catalysis. The tract at residues 1088–1239 is C-terminal hotdog fold; it reads NFVTIQKKEL…YTQLTPYKNQ (152 aa). The Proton donor; for dehydratase activity role is filled by Asp1150. Residues 2080 to 2119 adopt a coiled-coil conformation; sequence LENIKTDLSNKNDNNNNNNNNNNDNKESNIKELLDNDDDE. A disordered region spans residues 2087-2108; the sequence is LSNKNDNNNNNNNNNNDNKESN. Positions 2090–2102 are enriched in low complexity; that stretch reads KNDNNNNNNNNNN. In terms of domain architecture, Carrier spans 2558–2636; it reads SDDLSIREQI…QLIQSVTDAM (79 aa). O-(pantetheine 4'-phosphoryl)serine is present on Ser2596. Residues 2694-2714 traverse the membrane as a helical segment; it reads NTVFLTGSSGFIGIYILFYLI.

It depends on pantetheine 4'-phosphate as a cofactor.

It localises to the membrane. Probable polyketide synthase. In Dictyostelium discoideum (Social amoeba), this protein is Probable polyketide synthase 44 (pks44).